Consider the following 286-residue polypeptide: MVAVIIKGNEVAEKKRAQLTEEVVKLKEQGIVPGLAVILVGEDPASRSYVKGKEKGCEQVGIYSELIELPETITEERLLAEIDRLNGDDRINGILVQLPLPKHIEEKAIIERISPEKDVDGFHPISVGRMMTGQDTFLPCTPHGIVELVKETSLDISGKHVVVIGRSNIVGKPVGQLFLNENATVTYCHSKTQNMKELSKLADILIVAVGRPKMITADYIKEGAVVIDVGVNRLETGKLCGDVDFDNVLDVAGYITPVPKGVGPMTITMLLHNTVESAKRAGVVCK.

NADP(+) is bound by residues 165-167 (GRS), Ser-190, and Val-231.

The protein belongs to the tetrahydrofolate dehydrogenase/cyclohydrolase family. As to quaternary structure, homodimer.

It carries out the reaction (6R)-5,10-methylene-5,6,7,8-tetrahydrofolate + NADP(+) = (6R)-5,10-methenyltetrahydrofolate + NADPH. The enzyme catalyses (6R)-5,10-methenyltetrahydrofolate + H2O = (6R)-10-formyltetrahydrofolate + H(+). The protein operates within one-carbon metabolism; tetrahydrofolate interconversion. Its function is as follows. Catalyzes the oxidation of 5,10-methylenetetrahydrofolate to 5,10-methenyltetrahydrofolate and then the hydrolysis of 5,10-methenyltetrahydrofolate to 10-formyltetrahydrofolate. This chain is Bifunctional protein FolD, found in Bacillus cereus (strain B4264).